Consider the following 157-residue polypeptide: Rieske domain-containing protein (157 aa).

Methionine 1 carries the N-acetylmethionine modification. At serine 6 the chain carries Phosphoserine. 2 consecutive Rieske domains span residues 16–127 and 17–131; these read TSVC…VDNG and SVCV…NIYV. [2Fe-2S] cluster is bound by residues cysteine 57, histidine 59, cysteine 80, and histidine 83.

[2Fe-2S] cluster serves as cofactor.

The protein is Rieske domain-containing protein (Rfesd) of Mus musculus (Mouse).